Consider the following 208-residue polypeptide: ATP-dependent Clp protease proteolytic subunit 2 (208 aa).

S102 (nucleophile) is an active-site residue. Residue H127 is part of the active site.

It belongs to the peptidase S14 family. As to quaternary structure, fourteen ClpP subunits assemble into 2 heptameric rings which stack back to back to give a disk-like structure with a central cavity, resembling the structure of eukaryotic proteasomes.

The protein resides in the cytoplasm. The catalysed reaction is Hydrolysis of proteins to small peptides in the presence of ATP and magnesium. alpha-casein is the usual test substrate. In the absence of ATP, only oligopeptides shorter than five residues are hydrolyzed (such as succinyl-Leu-Tyr-|-NHMec, and Leu-Tyr-Leu-|-Tyr-Trp, in which cleavage of the -Tyr-|-Leu- and -Tyr-|-Trp bonds also occurs).. In terms of biological role, cleaves peptides in various proteins in a process that requires ATP hydrolysis. Has a chymotrypsin-like activity. Plays a major role in the degradation of misfolded proteins. The chain is ATP-dependent Clp protease proteolytic subunit 2 from Chelativorans sp. (strain BNC1).